Here is a 115-residue protein sequence, read N- to C-terminus: Immunoglobulin kappa variable 5-48 (115 aa).

An N-terminal signal peptide occupies residues 1-20; it reads MVSTPQFLVFLLFWIPASRG. The framework-1 stretch occupies residues 21–43; sequence DILLTQSPAILSVSPGERVSFSC. The cysteines at positions 43 and 108 are disulfide-linked. The segment at 44 to 54 is complementarity-determining-1; the sequence is RASQSIGTSIH. The framework-2 stretch occupies residues 55 to 69; that stretch reads WYQQRTNGSPRLLIK. The tract at residues 70-76 is complementarity-determining-2; the sequence is YASESIS. The tract at residues 77 to 108 is framework-3; it reads GIPSRFSGSGSGTDFTLSINSVESEDIADYYC. A complementarity-determining-3 region spans residues 109–115; sequence QQSNSWP.

The chain is Immunoglobulin kappa variable 5-48 from Mus musculus (Mouse).